A 427-amino-acid polypeptide reads, in one-letter code: Gamma-glutamyl phosphate reductase (427 aa).

It belongs to the gamma-glutamyl phosphate reductase family.

The protein localises to the cytoplasm. It carries out the reaction L-glutamate 5-semialdehyde + phosphate + NADP(+) = L-glutamyl 5-phosphate + NADPH + H(+). The protein operates within amino-acid biosynthesis; L-proline biosynthesis; L-glutamate 5-semialdehyde from L-glutamate: step 2/2. Functionally, catalyzes the NADPH-dependent reduction of L-glutamate 5-phosphate into L-glutamate 5-semialdehyde and phosphate. The product spontaneously undergoes cyclization to form 1-pyrroline-5-carboxylate. This Anaeromyxobacter sp. (strain K) protein is Gamma-glutamyl phosphate reductase.